Reading from the N-terminus, the 259-residue chain is UPF0246 protein PBPRA0561 (259 aa).

This sequence belongs to the UPF0246 family.

This is UPF0246 protein PBPRA0561 from Photobacterium profundum (strain SS9).